Consider the following 686-residue polypeptide: Ovotransferrin (686 aa).

Transferrin-like domains lie at 7-333 (VRWC…SLRK) and 345-670 (IQWC…SLNT). 6 disulfide bridges follow: C10–C45, C20–C36, C115–C197, C160–C174, C171–C182, and C228–C242. The interval 333 to 341 (KDQLTVGPR) is connecting region. 9 cysteine pairs are disulfide-bonded: C348–C380, C358–C371, C405–C680, C421–C643, C454–C530, C478–C671, C488–C502, C499–C513, and C570–C584. An N-linked (GlcNAc...) asparagine glycan is attached at N473. N548 is a glycosylation site (N-linked (GlcNAc...) asparagine).

It belongs to the transferrin family. Monomer.

The protein localises to the secreted. Transferrins are iron binding transport proteins which can bind two Fe(3+) ions in association with the binding of an anion, usually bicarbonate. It is responsible for the transport of iron from sites of absorption and heme degradation to those of storage and utilization. Serum transferrin may also have a further role in stimulating cell proliferation. Its function is as follows. Ovotransferrin has a bacteriostatic function. Its concentration in avian egg is the highest concentration of any transferrin in vivo. The protein is Ovotransferrin of Anas platyrhynchos (Mallard).